The following is a 117-amino-acid chain: S-adenosylmethionine decarboxylase proenzyme (117 aa).

The active-site Schiff-base intermediate with substrate; via pyruvic acid is serine 63. Serine 63 carries the pyruvic acid (Ser); by autocatalysis modification. Residue histidine 68 is the Proton acceptor; for processing activity of the active site. The active-site Proton donor; for catalytic activity is cysteine 83.

It belongs to the prokaryotic AdoMetDC family. Type 1 subfamily. In terms of assembly, heterotetramer of two alpha and two beta chains arranged as a dimer of alpha/beta heterodimers. Pyruvate serves as cofactor. Post-translationally, is synthesized initially as an inactive proenzyme. Formation of the active enzyme involves a self-maturation process in which the active site pyruvoyl group is generated from an internal serine residue via an autocatalytic post-translational modification. Two non-identical subunits are generated from the proenzyme in this reaction, and the pyruvate is formed at the N-terminus of the alpha chain, which is derived from the carboxyl end of the proenzyme. The post-translation cleavage follows an unusual pathway, termed non-hydrolytic serinolysis, in which the side chain hydroxyl group of the serine supplies its oxygen atom to form the C-terminus of the beta chain, while the remainder of the serine residue undergoes an oxidative deamination to produce ammonia and the pyruvoyl group blocking the N-terminus of the alpha chain.

The catalysed reaction is S-adenosyl-L-methionine + H(+) = S-adenosyl 3-(methylsulfanyl)propylamine + CO2. The protein operates within amine and polyamine biosynthesis; S-adenosylmethioninamine biosynthesis; S-adenosylmethioninamine from S-adenosyl-L-methionine: step 1/1. Functionally, catalyzes the decarboxylation of S-adenosylmethionine to S-adenosylmethioninamine (dcAdoMet), the propylamine donor required for the synthesis of the polyamines spermine and spermidine from the diamine putrescine. In Methanococcus aeolicus (strain ATCC BAA-1280 / DSM 17508 / OCM 812 / Nankai-3), this protein is S-adenosylmethionine decarboxylase proenzyme.